The following is a 361-amino-acid chain: Mitogen-activated protein kinase 1 (361 aa).

One can recognise a Protein kinase domain in the interval 28 to 316; that stretch reads YINLAYIGEG…VEAALAHPYL (289 aa). ATP is bound by residues 34-42 and Lys57; that span reads IGEGAYGMV. Catalysis depends on Asp152, which acts as the Proton acceptor. A Phosphothreonine modification is found at Thr188. A TXY motif is present at residues 188–190; that stretch reads TEY. Tyr190 is subject to Phosphotyrosine.

The protein belongs to the protein kinase superfamily. CMGC Ser/Thr protein kinase family. MAP kinase subfamily. Interacts with CDK2AP2. The cofactor is Mg(2+). Post-translationally, dually phosphorylated on Thr-188 and Tyr-190, which activates the enzyme. In terms of tissue distribution, expressed in the central nervous system, kidney, liver, intestine and the hematopoietic system. Also found in heart, muscle, pancreas and lung.

It is found in the cytoplasm. Its subcellular location is the cytoskeleton. It localises to the microtubule organizing center. The protein resides in the centrosome. The protein localises to the spindle. The catalysed reaction is L-seryl-[protein] + ATP = O-phospho-L-seryl-[protein] + ADP + H(+). It carries out the reaction L-threonyl-[protein] + ATP = O-phospho-L-threonyl-[protein] + ADP + H(+). With respect to regulation, activated by tyrosine phosphorylation during the M phase of the meiotic cell cycle. Dephosphorylated and inactivated by DUSP1. In terms of biological role, serine/threonine kinase which acts as an essential component of the MAP kinase signal transduction pathway. Plays an important role in the MAPK/ERK cascade. Depending on the cellular context, this cascade mediates diverse biological functions such as cell growth, adhesion, survival and differentiation through the regulation of transcription, translation, cytoskeletal rearrangements. The MAPK/ERK cascade also plays a role in initiation and regulation of meiosis, mitosis, and postmitotic functions in differentiated cells by phosphorylating a number of transcription factors. Many of the substrates are localized in the nucleus, and seem to participate in the regulation of transcription upon stimulation. However, other substrates are found in the cytosol as well as in other cellular organelles, and those are responsible for processes such as translation, mitosis and apoptosis. Moreover, the MAPK/ERK cascade is also involved in the regulation of the endosomal dynamics, including lysosome processing and endosome cycling through the perinuclear recycling compartment (PNRC); as well as in the fragmentation of the Golgi apparatus during mitosis. Phosphorylates microtubule-associated protein 2 (MAP2), myelin basic protein (MBP) and Elk-1. Phosphorylates dual specificity protein phosphatase 1 (DUSP1) during meiosis, increasing its stability. Activated by M phase promoting factor (MPF). Plays a role in the spindle assembly checkpoint. The polypeptide is Mitogen-activated protein kinase 1 (mapk1) (Xenopus laevis (African clawed frog)).